A 236-amino-acid polypeptide reads, in one-letter code: MSEITQLFQYNTLGALMAGLYEGTMTIGELLKHGDLGIGTLDSIDGELIVLDGKAYQAKGDKTIVELTDDIKVPYAAVVPHQAEVVFKQKFTVSDKELEDRIESYFDGQNLFRSIKITGKFPKMHVRMIPRAKSGTKFVEVSQNQPEYTEENIKGTIVGIWTPEMFHGVSVAGYHLHFISEDFTFGGHVLDFIIDNGTVEIGAIDQLNQSFPVQDRKFLFADLDIEALKKDIDVAE.

The protein belongs to the alpha-acetolactate decarboxylase family.

It catalyses the reaction (2S)-2-acetolactate + H(+) = (R)-acetoin + CO2. It functions in the pathway polyol metabolism; (R,R)-butane-2,3-diol biosynthesis; (R,R)-butane-2,3-diol from pyruvate: step 2/3. Functionally, converts acetolactate into acetoin. The sequence is that of Alpha-acetolactate decarboxylase (aldB) from Lactococcus lactis subsp. cremoris (strain MG1363).